The chain runs to 24 residues: GIGALSAKGALKGLAKGLAEHFAN.

Asparagine 24 is modified (asparagine amide).

This sequence belongs to the bombinin family. In terms of tissue distribution, expressed by the skin glands.

It localises to the secreted. Functionally, has antimicrobial and hemolytic activities. This is Bombinin from Bombina variegata (Yellow-bellied toad).